The chain runs to 59 residues: Potassium channel toxin alpha-KTx 15.4 (59 aa).

The first 22 residues, 1–22 (MKFSSIILLTLLICSMSIFGNC), serve as a signal peptide directing secretion. Gln23 carries the post-translational modification Pyrrolidone carboxylic acid. 3 disulfide bridges follow: Cys30–Cys50, Cys35–Cys55, and Cys39–Cys57.

Expressed by the venom gland.

The protein resides in the secreted. In terms of biological role, blocker of A-type voltage-gated potassium channels of cerebellar granular cells. May also inhibit Kv4/KCND when coexpressed with DPP6 or DPP10. The occlusion of the outer entry of the K(+) conducting pore is partially reversible and affects both open and closed channels. It shares the same target in rat brain than BmTX3 (AC Q8I0L5) and AmmTX3 (AC P60208). The polypeptide is Potassium channel toxin alpha-KTx 15.4 (Androctonus australis (Sahara scorpion)).